The sequence spans 631 residues: Chaperone protein HtpG (631 aa).

The a; substrate-binding stretch occupies residues 1 to 338 (MILKEQETLG…CNDLPLNISR (338 aa)). Residues 339-554 (EMLQHNRITQ…SNNMTTHMAK (216 aa)) form a b region. Positions 555 to 631 (LIVASGQNKP…KLLNHDTIVN (77 aa)) are c.

This sequence belongs to the heat shock protein 90 family. In terms of assembly, homodimer.

Its subcellular location is the cytoplasm. Functionally, molecular chaperone. Has ATPase activity. This Baumannia cicadellinicola subsp. Homalodisca coagulata protein is Chaperone protein HtpG.